A 347-amino-acid chain; its full sequence is Probable E3 ubiquitin-protein ligase DTX3 (347 aa).

The interval Gly-111–Ala-157 is disordered. Over residues Pro-120 to Pro-151 the composition is skewed to pro residues. The segment at Cys-164–Phe-205 adopts an RING-type zinc-finger fold.

The protein belongs to the Deltex family. Homodimer. May form a heterodimer with other members of the Deltex family. Interacts with NOTCH1. Strongly expressed in testis and brain. Weakly expressed in kidney.

The protein resides in the cytoplasm. It carries out the reaction S-ubiquitinyl-[E2 ubiquitin-conjugating enzyme]-L-cysteine + [acceptor protein]-L-lysine = [E2 ubiquitin-conjugating enzyme]-L-cysteine + N(6)-ubiquitinyl-[acceptor protein]-L-lysine.. It participates in protein modification; protein ubiquitination. Regulator of Notch signaling, a signaling pathway involved in cell-cell communications that regulates a broad spectrum of cell-fate determinations. Probably acts both as a positive and negative regulator of Notch, depending on the developmental and cell context. Functions as a ubiquitin ligase protein in vitro, suggesting that it may regulate the Notch pathway via some ubiquitin ligase activity. The protein is Probable E3 ubiquitin-protein ligase DTX3 (Dtx3) of Mus musculus (Mouse).